A 358-amino-acid polypeptide reads, in one-letter code: Na(+)/H(+) exchange regulatory cofactor NHE-RF1 (358 aa).

Ser-2 is subject to N-acetylserine. A phosphoserine mark is found at Ser-2 and Ser-46. The PDZ 1 domain occupies 14-94 (LCCLEKGPNG…AVRLLVVDPE (81 aa)). Residues 114-132 (QEAPGQAEPPAAAEVQGAG) show a composition bias toward low complexity. Positions 114-192 (QEAPGQAEPP…DPDSPAEASG (79 aa)) are disordered. A compositionally biased stretch (basic and acidic residues) spans 135-152 (NEPREADKSHPEQRELRP). In terms of domain architecture, PDZ 2 spans 154 to 234 (LCTMKKGPSG…ETKLLVVDRE (81 aa)). Phosphoserine occurs at positions 162, 269, 280, 290, and 291. The disordered stretch occupies residues 277–358 (ALESPRPALV…SKKNELFSNL (82 aa)). Positions 288–306 (SASSDTSEELNSQDSPPKQ) are enriched in polar residues. A Phosphothreonine modification is found at Thr-293. Residues Ser-294, Ser-299, and Ser-302 each carry the phosphoserine modification. Low complexity predominate over residues 307–319 (DSTAPSSTSSSDP). Positions 348-358 (WSKKNELFSNL) are enriched in basic and acidic residues.

In terms of assembly, homodimer, and heterodimer with NHERF2. Binds the N-termini of EZR, RDX and MSN. Binds the C-termini of PDGFRA, PDGFRB, ADRB2, NOS2 and CFTR. Binds ARHGAP17, EPI64, RACK1, OPRK1, GNAQ, CTNNB1 and PLCB3. Binds PDZK1. Interacts with CLCN3. Binds the C-terminus of PAG1. In resting T-cells, part of a PAG1-NHERF1-MSN complex which is disrupted upon TCR activation. Forms a complex with CFTR and SLC4A7. Forms a complex with SLC4A7 and ATP6V1B1. Interacts with TRPC4 (via the PDZ-binding domain). Directly interacts with HTR4. Interacts (via the PDZ 1 domain) with PODXL (via the C-terminal PDZ-binding motif DTHL); interaction is not detected in glomerular epithelium cells. Interacts (via the PDZ 1 domain) with PODXL (via the C-terminal PDZ-binding motif DTHL); the interaction take place early in the secretory pathway and is necessary for its apical membrane sorting. Interacts with SLC26A3. Interacts with MCC. Interacts with SLC34A1. Interacts (via the PDZ domains) with SLC26A6 isoform 4 and isoform 5. Interacts (via PDZ domains) with ACE2 (via PDZ-binding motif); the interaction may enhance ACE2 membrane residence. Phosphorylated on serine residues. As to expression, detected in liver, kidney, pancreas, prostate, spleen, small intestine and placenta, in particular in the syncytiotrophoblast.

The protein localises to the cytoplasm. Its subcellular location is the apical cell membrane. It is found in the endomembrane system. It localises to the cell projection. The protein resides in the filopodium. The protein localises to the ruffle. Its subcellular location is the microvillus. Functionally, scaffold protein that connects plasma membrane proteins with members of the ezrin/moesin/radixin family and thereby helps to link them to the actin cytoskeleton and to regulate their surface expression. Necessary for recycling of internalized ADRB2. Was first known to play a role in the regulation of the activity and subcellular location of SLC9A3. Necessary for cAMP-mediated phosphorylation and inhibition of SLC9A3. May enhance Wnt signaling. May participate in HTR4 targeting to microvilli. Involved in the regulation of phosphate reabsorption in the renal proximal tubules. Involved in sperm capacitation. May participate in the regulation of the chloride and bicarbonate homeostasis in spermatozoa. In Homo sapiens (Human), this protein is Na(+)/H(+) exchange regulatory cofactor NHE-RF1.